Consider the following 207-residue polypeptide: MLIKYVEFIKSATRAAHYPPGDLPEIAFAGRSNVGKSSLINVLVNRKSLVRTSSTPGRTQLINFFDVNGQFTLVDLPGYGFAKVPLAVKKQWGPMMENYLAKRANLRGVILILDIRRTPVAEDIQMLHWLQAYSIKPILVITKCDKVSKNERGKQSRIIAQTLGVETEELNFFSALNREGKDLIWRRIEEVLPAETAGSAGEAPKAT.

The EngB-type G domain occupies 22–194; the sequence is DLPEIAFAGR…WRRIEEVLPA (173 aa). GTP is bound by residues 30–37, 57–61, 75–78, 142–145, and 173–175; these read GRSNVGKS, GRTQL, DLPG, TKCD, and FSA. Mg(2+) is bound by residues serine 37 and threonine 59.

It belongs to the TRAFAC class TrmE-Era-EngA-EngB-Septin-like GTPase superfamily. EngB GTPase family. Requires Mg(2+) as cofactor.

Necessary for normal cell division and for the maintenance of normal septation. The chain is Probable GTP-binding protein EngB from Geotalea daltonii (strain DSM 22248 / JCM 15807 / FRC-32) (Geobacter daltonii).